Reading from the N-terminus, the 377-residue chain is Succinyl-diaminopimelate desuccinylase (377 aa).

H66 provides a ligand contact to Zn(2+). D68 is an active-site residue. D99 is a Zn(2+) binding site. The active-site Proton acceptor is E133. Residues E134, E162, and H348 each coordinate Zn(2+).

This sequence belongs to the peptidase M20A family. DapE subfamily. Homodimer. Requires Zn(2+) as cofactor. The cofactor is Co(2+).

It catalyses the reaction N-succinyl-(2S,6S)-2,6-diaminopimelate + H2O = (2S,6S)-2,6-diaminopimelate + succinate. It functions in the pathway amino-acid biosynthesis; L-lysine biosynthesis via DAP pathway; LL-2,6-diaminopimelate from (S)-tetrahydrodipicolinate (succinylase route): step 3/3. Catalyzes the hydrolysis of N-succinyl-L,L-diaminopimelic acid (SDAP), forming succinate and LL-2,6-diaminopimelate (DAP), an intermediate involved in the bacterial biosynthesis of lysine and meso-diaminopimelic acid, an essential component of bacterial cell walls. In Histophilus somni (strain 2336) (Haemophilus somnus), this protein is Succinyl-diaminopimelate desuccinylase.